The following is a 702-amino-acid chain: Zinc finger CCCH domain-containing protein 62 (702 aa).

Positions 1–77 (MAAPAADDDD…SYDDPTFDPA (77 aa)) are disordered. The segment covering 18 to 54 (EEDDGEEEEGSEEEVESDDEEEEEGEGYDWSEEDDPE) has biased composition (acidic residues). Residues 132–166 (LEKLKVYECKAYLRMHKLRLSGNKEVLLTRIRGQI) enclose the SAP domain. 4 disordered regions span residues 288 to 349 (EKHA…NTVQ), 405 to 532 (SRTS…QQQP), 546 to 602 (GGTS…RETH), and 634 to 673 (QMSQDQYHHQQNHHQNYHGRQGMNGNQYHDRQNHNQNPQR). The span at 298–325 (KTREVRIKDKENERMRRLNRNKENKSKG) shows a compositional bias: basic and acidic residues. Polar residues-rich tracts occupy residues 326-349 (QDNMNKKSSQAVFPQHTVTTNTVQ) and 405-419 (SRTSTTQLINHQAPS). Residues 430 to 448 (QQQQQQQPPKSIKPAPIQQ) are compositionally biased toward low complexity. Composition is skewed to polar residues over residues 472–502 (SQEQRAAVSQTSAARQDFTNHQAPPSRQHGG), 522–532 (QQAVSYTQQQP), 546–565 (GGTSTSRTGFMDRQSNNWGS), and 575–591 (PFTQKAKTYQHGSNGSG). The C3H1-type zinc finger occupies 674-702 (FRPWKPCFIYQQQGWCPYGENCKFMHDLR).

The chain is Zinc finger CCCH domain-containing protein 62 from Oryza sativa subsp. japonica (Rice).